We begin with the raw amino-acid sequence, 473 residues long: MKTLYSLRRFYHVETLFNGTLSISGRDQESTGFAWWSGNARLINLSGKLLGAHVAHAGLIVFWAGAMNLFEVAHFTPEKPMYEQGLILLPHLATLGWGVGPGGEVIDTFPYFVSGVLHLISSAVLGFGGVYHSLIGPETLEESFPFFGYVWKDKNKMTTILGIHLIVLGVGAYLLVWKACYFGGVYDTWAPGGGDVRIITDPTLSPAVIFGYLLKSPFGGEGWICSVDNMEDVIGGHIWIGNLLIFGGIWHILTKPWAWARRAFVWSGEAYLSYSLGAIATMGWIACCFSWFNNTAYPSEFYGPTGPEASQAQAFTFLVRDQRLGANIASSQGPTGLGKYLMRSPSGEIIFGGETMRFWDCRAPWIEPLRGPNGLDLNKLKNDIQPWQERRSAEYMTHAPLGSLNSVGGVATEINAVNFVSPRSWLATSHFTLAFFFFVGHLWHAGRARAAAAGFEKGIERETEPVLFMKPLD.

Residues 1-14 (MKTLYSLRRFYHVE) constitute a propeptide that is removed on maturation. T15 is modified (N-acetylthreonine). The residue at position 15 (T15) is a Phosphothreonine. The next 5 helical transmembrane spans lie at 69–93 (LFEV…PHLA), 134–155 (LIGP…KDKN), 178–200 (KACY…RIIT), 255–275 (KPWA…LSYS), and 291–312 (WFNN…ASQA). E367 serves as a coordination point for [CaMn4O5] cluster. Residues 447-471 (RARAAAAGFEKGIERETEPVLFMKP) traverse the membrane as a helical segment.

The protein belongs to the PsbB/PsbC family. PsbC subfamily. As to quaternary structure, PSII is composed of 1 copy each of membrane proteins PsbA, PsbB, PsbC, PsbD, PsbE, PsbF, PsbH, PsbI, PsbJ, PsbK, PsbL, PsbM, PsbT, PsbX, PsbY, PsbZ, Psb30/Ycf12, at least 3 peripheral proteins of the oxygen-evolving complex and a large number of cofactors. It forms dimeric complexes. It depends on Binds multiple chlorophylls and provides some of the ligands for the Ca-4Mn-5O cluster of the oxygen-evolving complex. It may also provide a ligand for a Cl- that is required for oxygen evolution. PSII binds additional chlorophylls, carotenoids and specific lipids. as a cofactor.

The protein resides in the plastid. The protein localises to the chloroplast thylakoid membrane. Functionally, one of the components of the core complex of photosystem II (PSII). It binds chlorophyll and helps catalyze the primary light-induced photochemical processes of PSII. PSII is a light-driven water:plastoquinone oxidoreductase, using light energy to abstract electrons from H(2)O, generating O(2) and a proton gradient subsequently used for ATP formation. This is Photosystem II CP43 reaction center protein from Mesostigma viride (Green alga).